An 80-amino-acid polypeptide reads, in one-letter code: Small ribosomal subunit protein uS17 (80 aa).

This sequence belongs to the universal ribosomal protein uS17 family. Part of the 30S ribosomal subunit.

In terms of biological role, one of the primary rRNA binding proteins, it binds specifically to the 5'-end of 16S ribosomal RNA. In Beijerinckia indica subsp. indica (strain ATCC 9039 / DSM 1715 / NCIMB 8712), this protein is Small ribosomal subunit protein uS17.